A 318-amino-acid chain; its full sequence is Vomeronasal type-1 receptor A11 (318 aa).

The Extracellular segment spans residues Met-1–Thr-32. Residues Phe-33–Leu-53 form a helical membrane-spanning segment. The Cytoplasmic portion of the chain corresponds to Lys-54–Asp-65. A helical transmembrane segment spans residues Leu-66–Ala-86. Topologically, residues Thr-87–Cys-101 are extracellular. Cys-101 and Cys-188 form a disulfide bridge. A helical membrane pass occupies residues Lys-102–Thr-118. Topologically, residues Thr-119 to His-147 are cytoplasmic. The chain crosses the membrane as a helical span at residues Ile-148 to Leu-168. Residues Ser-169–Ala-206 are Extracellular-facing. Asn-175 carries an N-linked (GlcNAc...) asparagine glycan. A helical transmembrane segment spans residues Leu-207–Leu-227. The Cytoplasmic segment spans residues Cys-228–Gln-254. A helical membrane pass occupies residues Thr-255–Cys-275. The Extracellular segment spans residues Ser-276–Thr-285. Residues Ser-286–Met-306 traverse the membrane as a helical segment. The Cytoplasmic segment spans residues Ser-307–Gly-318.

This sequence belongs to the G-protein coupled receptor 1 family.

It localises to the cell membrane. Putative pheromone receptor implicated in the regulation of social and reproductive behavior. The protein is Vomeronasal type-1 receptor A11 of Mus musculus (Mouse).